Here is a 249-residue protein sequence, read N- to C-terminus: tRNA pseudouridine synthase A (249 aa).

Aspartate 53 (nucleophile) is an active-site residue. Tyrosine 111 provides a ligand contact to substrate.

It belongs to the tRNA pseudouridine synthase TruA family. In terms of assembly, homodimer.

It carries out the reaction uridine(38/39/40) in tRNA = pseudouridine(38/39/40) in tRNA. Its function is as follows. Formation of pseudouridine at positions 38, 39 and 40 in the anticodon stem and loop of transfer RNAs. The chain is tRNA pseudouridine synthase A from Streptococcus pneumoniae (strain P1031).